We begin with the raw amino-acid sequence, 373 residues long: Dual-specificity RNA methyltransferase RlmN (373 aa).

The active-site Proton acceptor is Glu-94. Positions Glu-100–Asp-339 constitute a Radical SAM core domain. A disulfide bridge connects residues Cys-107 and Cys-344. The [4Fe-4S] cluster site is built by Cys-114, Cys-118, and Cys-121. S-adenosyl-L-methionine-binding positions include Gly-168–Glu-169, Ser-200, Ser-222–His-224, and Asn-301. Cys-344 (S-methylcysteine intermediate) is an active-site residue.

It belongs to the radical SAM superfamily. RlmN family. It depends on [4Fe-4S] cluster as a cofactor.

Its subcellular location is the cytoplasm. The catalysed reaction is adenosine(2503) in 23S rRNA + 2 reduced [2Fe-2S]-[ferredoxin] + 2 S-adenosyl-L-methionine = 2-methyladenosine(2503) in 23S rRNA + 5'-deoxyadenosine + L-methionine + 2 oxidized [2Fe-2S]-[ferredoxin] + S-adenosyl-L-homocysteine. It carries out the reaction adenosine(37) in tRNA + 2 reduced [2Fe-2S]-[ferredoxin] + 2 S-adenosyl-L-methionine = 2-methyladenosine(37) in tRNA + 5'-deoxyadenosine + L-methionine + 2 oxidized [2Fe-2S]-[ferredoxin] + S-adenosyl-L-homocysteine. In terms of biological role, specifically methylates position 2 of adenine 2503 in 23S rRNA and position 2 of adenine 37 in tRNAs. m2A2503 modification seems to play a crucial role in the proofreading step occurring at the peptidyl transferase center and thus would serve to optimize ribosomal fidelity. This Shewanella putrefaciens (strain CN-32 / ATCC BAA-453) protein is Dual-specificity RNA methyltransferase RlmN.